The primary structure comprises 475 residues: MATCTLRGLAVAGGGESSESEDDGWEIGYLDRAVQKLKGPLLPEEKNETFKKALTTGDISLVQELLDSGISVESSFRYGWTPLMYAASVSNVELVRVLLDRGANASFDKDKQTILITACSARGSEEQILKCVELLLSRNADPNVACRRLMTPIMYAARDGHPQVVALLVAHGAEVNSQDENGYTALTWAARQGHKNVVLKLLELGANKMLQTKDGKTPSEIAKRNKHLEIFNFLSLTLNPLEGKLQQLTKEETICKLLTTDSDKENDHLFSSYTAFGDLEIFLHGLGLEHMTDLLKERDITLRHLLTMRKDEFTKNGITSRDQQKILAALKELEVEEIKFGELPEVAKLEISGDEFLNFLLKLNKQCGHLITAVQNIITELPVNSHKIVLEWASPRNFTSVCEELVSNVEDLSKEVCKLKDLIQKLQNERENDPTHIPLMEEVSTWNSKILKRTAIAVCGVGLLLFVCKLTLQRK.

3 positions are modified to phosphoserine: S17, S18, and S20. ANK repeat units follow at residues 45–74 (EKNETFKKALTTGDISLVQELLDSGISVES), 78–107 (YGWTPLMYAASVSNVELVRVLLDRGANASF), 110–144 (DKQTILITACSARGSEEQILKCVELLLSRNADPNV), 148–177 (RLMTPIMYAARDGHPQVVALLVAHGAEVNS), 181–210 (NGYTALTWAARQGHKNVVLKLLELGANKML), and 214–243 (DGKTPSEIAKRNKHLEIFNFLSLTLNPLEG). Residues 272–334 (SYTAFGDLEI…KILAALKELE (63 aa)) form the SAM domain.

In terms of assembly, interacts with DDX4, PIWIL1, RANBP9 and TDRD1.

The protein resides in the cytoplasm. Its function is as follows. Plays a central role during spermatogenesis by repressing transposable elements and preventing their mobilization, which is essential for the germline integrity. Acts via the piRNA metabolic process, which mediates the repression of transposable elements during meiosis by forming complexes composed of piRNAs and Piwi proteins and governs the methylation and subsequent repression of transposons. Its association with pi-bodies suggests a participation in the primary piRNAs metabolic process. Required prior to the pachytene stage to facilitate the production of multiple types of piRNAs, including those associated with repeats involved in the regulation of retrotransposons. May act by mediating protein-protein interactions during germ cell maturation. The polypeptide is Ankyrin repeat, SAM and basic leucine zipper domain-containing protein 1 (ASZ1) (Mustela putorius furo (European domestic ferret)).